A 932-amino-acid polypeptide reads, in one-letter code: DNA mismatch repair protein MutS (932 aa).

615 to 622 (GPNMAGKS) is a binding site for ATP.

This sequence belongs to the DNA mismatch repair MutS family.

Its function is as follows. This protein is involved in the repair of mismatches in DNA. It is possible that it carries out the mismatch recognition step. This protein has a weak ATPase activity. This chain is DNA mismatch repair protein MutS, found in Clostridium botulinum (strain Loch Maree / Type A3).